Consider the following 84-residue polypeptide: Large ribosomal subunit protein bL27 (84 aa).

The interval 1-20 (MAHKKAGGSTRNGRDSHSKR) is disordered.

Belongs to the bacterial ribosomal protein bL27 family.

The protein is Large ribosomal subunit protein bL27 of Blochmanniella pennsylvanica (strain BPEN).